The chain runs to 189 residues: Phosphoheptose isomerase (189 aa).

The region spanning 34 to 189 (VADTLKNGKK…CQAVDEAFRG (156 aa)) is the SIS domain. 49–51 (NGG) serves as a coordination point for substrate. Zn(2+) is bound by residues histidine 58 and glutamate 62. Residues glutamate 62, 91–92 (ND), 117–119 (STS), serine 122, and glutamine 169 contribute to the substrate site. The Zn(2+) site is built by glutamine 169 and histidine 177.

This sequence belongs to the SIS family. GmhA subfamily. As to quaternary structure, homotetramer. Zn(2+) is required as a cofactor.

It is found in the cytoplasm. It carries out the reaction 2 D-sedoheptulose 7-phosphate = D-glycero-alpha-D-manno-heptose 7-phosphate + D-glycero-beta-D-manno-heptose 7-phosphate. It participates in carbohydrate biosynthesis; D-glycero-D-manno-heptose 7-phosphate biosynthesis; D-glycero-alpha-D-manno-heptose 7-phosphate and D-glycero-beta-D-manno-heptose 7-phosphate from sedoheptulose 7-phosphate: step 1/1. In terms of biological role, catalyzes the isomerization of sedoheptulose 7-phosphate in D-glycero-D-manno-heptose 7-phosphate. This chain is Phosphoheptose isomerase, found in Campylobacter concisus (strain 13826).